Here is a 197-residue protein sequence, read N- to C-terminus: DnaJ homolog subfamily C member 5 (197 aa).

One can recognise a J domain in the interval 13–82 (GESLYHVLGL…RNIYDKYGSL (70 aa)). A disordered region spans residues 153–197 (EDLEAQMQSDERDTEGPVLVQPASATETTQLTSDSHASYHTDGFN). Residues 175–197 (ASATETTQLTSDSHASYHTDGFN) are compositionally biased toward polar residues.

Palmitoylated. Palmitoylation occurs probably in the cysteine-rich domain and regulates DNAJC5 stable membrane attachment.

It localises to the cytoplasm. It is found in the cytosol. The protein localises to the membrane. Its subcellular location is the cytoplasmic vesicle. The protein resides in the secretory vesicle. It localises to the chromaffin granule membrane. It is found in the melanosome. The protein localises to the cell membrane. Functionally, may have an important role in presynaptic function. May be involved in calcium-dependent neurotransmitter release at nerve endings. This is DnaJ homolog subfamily C member 5 from Xenopus laevis (African clawed frog).